A 518-amino-acid polypeptide reads, in one-letter code: Protease Do-like 4, mitochondrial (518 aa).

A mitochondrion-targeting transit peptide spans 1 to 23 (MLFRFLQTLARFCRFLLISVLGF). The tract at residues 98–262 (ESGGSGFVIS…IPTPVIKHFL (165 aa)) is serine protease. Catalysis depends on charge relay system residues histidine 116, aspartate 147, and serine 225. In terms of domain architecture, PDZ spans 278–358 (DISYQLMENS…HFVSMKKLDE (81 aa)).

It belongs to the peptidase S1C family.

Its subcellular location is the mitochondrion membrane. Putative serine protease. This is Protease Do-like 4, mitochondrial (DEGP4) from Arabidopsis thaliana (Mouse-ear cress).